A 591-amino-acid polypeptide reads, in one-letter code: tRNA 5-methylaminomethyl-2-thiouridine biosynthesis bifunctional protein MnmC (591 aa).

The tract at residues 1-232 is tRNA (mnm(5)s(2)U34)-methyltransferase; the sequence is MTPTAPSPLV…KRERLEAWRP (232 aa). Residues 247–591 are FAD-dependent cmnm(5)s(2)U34 oxidoreductase; the sequence is IGGGIAGAAL…FDSPVTRSRL (345 aa).

This sequence in the N-terminal section; belongs to the methyltransferase superfamily. tRNA (mnm(5)s(2)U34)-methyltransferase family. It in the C-terminal section; belongs to the DAO family. Requires FAD as cofactor.

It localises to the cytoplasm. The enzyme catalyses 5-aminomethyl-2-thiouridine(34) in tRNA + S-adenosyl-L-methionine = 5-methylaminomethyl-2-thiouridine(34) in tRNA + S-adenosyl-L-homocysteine + H(+). In terms of biological role, catalyzes the last two steps in the biosynthesis of 5-methylaminomethyl-2-thiouridine (mnm(5)s(2)U) at the wobble position (U34) in tRNA. Catalyzes the FAD-dependent demodification of cmnm(5)s(2)U34 to nm(5)s(2)U34, followed by the transfer of a methyl group from S-adenosyl-L-methionine to nm(5)s(2)U34, to form mnm(5)s(2)U34. The sequence is that of tRNA 5-methylaminomethyl-2-thiouridine biosynthesis bifunctional protein MnmC from Caulobacter vibrioides (strain ATCC 19089 / CIP 103742 / CB 15) (Caulobacter crescentus).